Here is a 178-residue protein sequence, read N- to C-terminus: UPF0215 protein STK_03040 (178 aa).

Belongs to the UPF0215 family.

In Sulfurisphaera tokodaii (strain DSM 16993 / JCM 10545 / NBRC 100140 / 7) (Sulfolobus tokodaii), this protein is UPF0215 protein STK_03040.